The following is a 44-amino-acid chain: TFEPNAEECIVDGRCKHRSDWPCEMSSGTTGRCDVSLGACGCSN.

Residues Glu7, Glu8, and Glu24 each carry the 4-carboxyglutamate modification. 3 disulfide bridges follow: Cys9/Cys33, Cys15/Cys40, and Cys23/Cys42.

Expressed by the venom duct.

It is found in the secreted. The polypeptide is Conotoxin Cl9a (Californiconus californicus (California cone)).